A 210-amino-acid polypeptide reads, in one-letter code: Na(+)-translocating NADH-quinone reductase subunit D (210 aa).

Helical transmembrane passes span 42 to 62 (FVMT…VSVI), 72 to 92 (IIVQ…ILKA), 103 to 123 (VFVG…AFAM), 131 to 151 (LIDG…VGFF), and 178 to 198 (NGLM…IWAI).

This sequence belongs to the NqrDE/RnfAE family. Composed of six subunits; NqrA, NqrB, NqrC, NqrD, NqrE and NqrF.

It localises to the cell inner membrane. The enzyme catalyses a ubiquinone + n Na(+)(in) + NADH + H(+) = a ubiquinol + n Na(+)(out) + NAD(+). In terms of biological role, NQR complex catalyzes the reduction of ubiquinone-1 to ubiquinol by two successive reactions, coupled with the transport of Na(+) ions from the cytoplasm to the periplasm. NqrA to NqrE are probably involved in the second step, the conversion of ubisemiquinone to ubiquinol. This is Na(+)-translocating NADH-quinone reductase subunit D from Vibrio vulnificus (strain YJ016).